The following is an 856-amino-acid chain: DNA gyrase subunit A (856 aa).

The Topo IIA-type catalytic domain occupies 45–517 (LPDARDGLKP…DDGTVTHEDL (473 aa)). Tyrosine 133 (O-(5'-phospho-DNA)-tyrosine intermediate) is an active-site residue. Positions 544 to 550 (QHRGGKG) match the GyrA-box motif. Residues 822-856 (TVASVDTHPRTDDSSEADSGDGESESENATATTPS) are disordered. The segment covering 835–847 (SSEADSGDGESES) has biased composition (acidic residues).

Belongs to the type II topoisomerase GyrA/ParC subunit family. Heterotetramer, composed of two GyrA and two GyrB chains. In the heterotetramer, GyrA contains the active site tyrosine that forms a transient covalent intermediate with DNA, while GyrB binds cofactors and catalyzes ATP hydrolysis.

Its subcellular location is the cytoplasm. It carries out the reaction ATP-dependent breakage, passage and rejoining of double-stranded DNA.. In terms of biological role, a type II topoisomerase that negatively supercoils closed circular double-stranded (ds) DNA in an ATP-dependent manner to modulate DNA topology and maintain chromosomes in an underwound state. Negative supercoiling favors strand separation, and DNA replication, transcription, recombination and repair, all of which involve strand separation. Also able to catalyze the interconversion of other topological isomers of dsDNA rings, including catenanes and knotted rings. Type II topoisomerases break and join 2 DNA strands simultaneously in an ATP-dependent manner. In Haloquadratum walsbyi (strain DSM 16790 / HBSQ001), this protein is DNA gyrase subunit A.